The primary structure comprises 580 residues: Pentatricopeptide repeat-containing protein At5g10690 (580 aa).

PPR repeat units lie at residues 76 to 110 (NTIV…GGIG), 112 to 142 (DSIS…IEYG), 151 to 181 (SSSL…YDIL), 189 to 223 (SVLI…RLEP), 224 to 254 (DRLT…MKEK), 266 to 296 (DVVT…MKLC), 302 to 337 (DRTA…GANE), 342 to 376 (KPHL…SSGS), and 382 to 417 (QQEA…KTIP). Residues 486–553 (VPIVDDRGSC…IVVHCGNFSG (68 aa)) enclose the CBS domain.

The protein belongs to the PPR family. P subfamily.

In Arabidopsis thaliana (Mouse-ear cress), this protein is Pentatricopeptide repeat-containing protein At5g10690 (CBSPPR1).